We begin with the raw amino-acid sequence, 313 residues long: Homoserine O-succinyltransferase (313 aa).

C142 serves as the catalytic Acyl-thioester intermediate. Substrate contacts are provided by K163 and S192. The active-site Proton acceptor is H235. The active site involves E237. R249 contributes to the substrate binding site.

The protein belongs to the MetA family.

It is found in the cytoplasm. The enzyme catalyses L-homoserine + succinyl-CoA = O-succinyl-L-homoserine + CoA. Its pathway is amino-acid biosynthesis; L-methionine biosynthesis via de novo pathway; O-succinyl-L-homoserine from L-homoserine: step 1/1. Its function is as follows. Transfers a succinyl group from succinyl-CoA to L-homoserine, forming succinyl-L-homoserine. This is Homoserine O-succinyltransferase from Shewanella oneidensis (strain ATCC 700550 / JCM 31522 / CIP 106686 / LMG 19005 / NCIMB 14063 / MR-1).